A 273-amino-acid chain; its full sequence is NADPH-dependent 7-cyano-7-deazaguanine reductase (273 aa).

80–82 (VES) is a binding site for substrate. Residue 82-83 (SK) participates in NADPH binding. Cys180 acts as the Thioimide intermediate in catalysis. The Proton donor role is filled by Asp187. Residue 219–220 (HE) participates in substrate binding. 248–249 (RG) contributes to the NADPH binding site.

The protein belongs to the GTP cyclohydrolase I family. QueF type 2 subfamily. Homodimer.

The protein localises to the cytoplasm. It carries out the reaction 7-aminomethyl-7-carbaguanine + 2 NADP(+) = 7-cyano-7-deazaguanine + 2 NADPH + 3 H(+). The protein operates within tRNA modification; tRNA-queuosine biosynthesis. Its function is as follows. Catalyzes the NADPH-dependent reduction of 7-cyano-7-deazaguanine (preQ0) to 7-aminomethyl-7-deazaguanine (preQ1). This Bordetella bronchiseptica (strain ATCC BAA-588 / NCTC 13252 / RB50) (Alcaligenes bronchisepticus) protein is NADPH-dependent 7-cyano-7-deazaguanine reductase.